The following is a 300-amino-acid chain: NAD kinase (300 aa).

Asp75 acts as the Proton acceptor in catalysis. Residues 75–76 (DG), 149–150 (ND), Arg177, Asp179, 190–195 (TAYALS), Ala214, and Gln248 contribute to the NAD(+) site.

It belongs to the NAD kinase family. The cofactor is a divalent metal cation.

The protein resides in the cytoplasm. The catalysed reaction is NAD(+) + ATP = ADP + NADP(+) + H(+). Functionally, involved in the regulation of the intracellular balance of NAD and NADP, and is a key enzyme in the biosynthesis of NADP. Catalyzes specifically the phosphorylation on 2'-hydroxyl of the adenosine moiety of NAD to yield NADP. In Burkholderia pseudomallei (strain K96243), this protein is NAD kinase.